The chain runs to 184 residues: ATP synthase subunit b 1 (184 aa).

A helical membrane pass occupies residues 4–24; it reads LSILAVLAASPAMAATGPFLS.

The protein belongs to the ATPase B chain family. In terms of assembly, F-type ATPases have 2 components, F(1) - the catalytic core - and F(0) - the membrane proton channel. F(1) has five subunits: alpha(3), beta(3), gamma(1), delta(1), epsilon(1). F(0) has three main subunits: a(1), b(2) and c(10-14). The alpha and beta chains form an alternating ring which encloses part of the gamma chain. F(1) is attached to F(0) by a central stalk formed by the gamma and epsilon chains, while a peripheral stalk is formed by the delta and b chains.

Its subcellular location is the cell inner membrane. F(1)F(0) ATP synthase produces ATP from ADP in the presence of a proton or sodium gradient. F-type ATPases consist of two structural domains, F(1) containing the extramembraneous catalytic core and F(0) containing the membrane proton channel, linked together by a central stalk and a peripheral stalk. During catalysis, ATP synthesis in the catalytic domain of F(1) is coupled via a rotary mechanism of the central stalk subunits to proton translocation. Its function is as follows. Component of the F(0) channel, it forms part of the peripheral stalk, linking F(1) to F(0). This Cereibacter sphaeroides (strain ATCC 17023 / DSM 158 / JCM 6121 / CCUG 31486 / LMG 2827 / NBRC 12203 / NCIMB 8253 / ATH 2.4.1.) (Rhodobacter sphaeroides) protein is ATP synthase subunit b 1.